Consider the following 196-residue polypeptide: Pyridoxal 5'-phosphate synthase subunit PdxT (196 aa).

52–54 (GES) is a binding site for L-glutamine. The active-site Nucleophile is C84. Residues R113 and 141 to 142 (IR) contribute to the L-glutamine site. Catalysis depends on charge relay system residues H178 and E180.

Belongs to the glutaminase PdxT/SNO family. As to quaternary structure, in the presence of PdxS, forms a dodecamer of heterodimers. Only shows activity in the heterodimer.

The enzyme catalyses aldehydo-D-ribose 5-phosphate + D-glyceraldehyde 3-phosphate + L-glutamine = pyridoxal 5'-phosphate + L-glutamate + phosphate + 3 H2O + H(+). It carries out the reaction L-glutamine + H2O = L-glutamate + NH4(+). The protein operates within cofactor biosynthesis; pyridoxal 5'-phosphate biosynthesis. Catalyzes the hydrolysis of glutamine to glutamate and ammonia as part of the biosynthesis of pyridoxal 5'-phosphate. The resulting ammonia molecule is channeled to the active site of PdxS. The sequence is that of Pyridoxal 5'-phosphate synthase subunit PdxT from Pyrococcus horikoshii (strain ATCC 700860 / DSM 12428 / JCM 9974 / NBRC 100139 / OT-3).